A 310-amino-acid polypeptide reads, in one-letter code: Ribosomal RNA small subunit methyltransferase H (310 aa).

S-adenosyl-L-methionine-binding positions include Gly-35–His-37, Asp-52, Phe-79, Asp-100, and Gln-107.

It belongs to the methyltransferase superfamily. RsmH family.

It localises to the cytoplasm. It carries out the reaction cytidine(1402) in 16S rRNA + S-adenosyl-L-methionine = N(4)-methylcytidine(1402) in 16S rRNA + S-adenosyl-L-homocysteine + H(+). Specifically methylates the N4 position of cytidine in position 1402 (C1402) of 16S rRNA. This chain is Ribosomal RNA small subunit methyltransferase H, found in Anaeromyxobacter sp. (strain K).